The following is a 124-amino-acid chain: uncharacterized protein (124 aa).

The next 3 membrane-spanning stretches (helical) occupy residues 14–34 (KAIVIESLLLVVFYLLIYGWQ), 41–61 (FSYGFLSAFLPFCTFIFIIFY), and 85–105 (MVFIIIAIKWLFVINFIAFFV).

The protein resides in the cell membrane. This is an uncharacterized protein from Haemophilus influenzae (strain ATCC 51907 / DSM 11121 / KW20 / Rd).